A 262-amino-acid polypeptide reads, in one-letter code: Flap endonuclease Xni (262 aa).

Aspartate 105 lines the Mg(2+) pocket. The region spanning 162 to 257 (ERSQFLDLMA…FRVIDSPPEK (96 aa)) is the 5'-3' exonuclease domain. K(+)-binding residues include leucine 172, alanine 173, proline 181, isoleucine 183, and isoleucine 186. The tract at residues 185–190 (GIGPKS) is interaction with DNA.

This sequence belongs to the Xni family. Mg(2+) is required as a cofactor. Requires K(+) as cofactor.

Its function is as follows. Has flap endonuclease activity. During DNA replication, flap endonucleases cleave the 5'-overhanging flap structure that is generated by displacement synthesis when DNA polymerase encounters the 5'-end of a downstream Okazaki fragment. This is Flap endonuclease Xni from Shewanella baltica (strain OS223).